Here is a 408-residue protein sequence, read N- to C-terminus: Elongation factor Tu, chloroplastic (408 aa).

The region spanning 10–213 (KPHVNIGTIG…KVDEYIPTPE (204 aa)) is the tr-type G domain. The segment at 19 to 26 (GHVDHGKT) is G1. A GTP-binding site is contributed by 19–26 (GHVDHGKT). Position 26 (Thr-26) interacts with Mg(2+). The interval 59-63 (GITIN) is G2. Positions 80-83 (DCPG) are G3. GTP-binding positions include 80–84 (DCPGH) and 135–138 (NKAD). The G4 stretch occupies residues 135-138 (NKAD). The G5 stretch occupies residues 173-175 (SAL).

Belongs to the TRAFAC class translation factor GTPase superfamily. Classic translation factor GTPase family. EF-Tu/EF-1A subfamily.

It is found in the plastid. The protein resides in the chloroplast. The catalysed reaction is GTP + H2O = GDP + phosphate + H(+). Its function is as follows. GTP hydrolase that promotes the GTP-dependent binding of aminoacyl-tRNA to the A-site of ribosomes during protein biosynthesis. In Guillardia theta (Cryptophyte), this protein is Elongation factor Tu, chloroplastic (tufA).